The chain runs to 507 residues: ATP synthase subunit alpha, chloroplastic (507 aa).

170–177 contacts ATP; that stretch reads GDRQTGKT.

Belongs to the ATPase alpha/beta chains family. As to quaternary structure, F-type ATPases have 2 components, CF(1) - the catalytic core - and CF(0) - the membrane proton channel. CF(1) has five subunits: alpha(3), beta(3), gamma(1), delta(1), epsilon(1). CF(0) has four main subunits: a, b, b' and c.

The protein localises to the plastid. It localises to the chloroplast thylakoid membrane. The catalysed reaction is ATP + H2O + 4 H(+)(in) = ADP + phosphate + 5 H(+)(out). Functionally, produces ATP from ADP in the presence of a proton gradient across the membrane. The alpha chain is a regulatory subunit. This is ATP synthase subunit alpha, chloroplastic from Sorghum bicolor (Sorghum).